A 93-amino-acid chain; its full sequence is Consomatin G2 (93 aa).

A signal peptide spans 1-18; the sequence is MQTAYWVMLMMMVCITAP. The propeptide occupies 19 to 69; sequence LPEGGKPNSGIRGLVPNDLTPQHTLRSLISRRQTDVLLDATLLTTPAPEQR. Cys72 and Cys77 form a disulfide bridge. Trp74 carries the D-tryptophan modification. A propeptide spanning residues 79–93 is cleaved from the precursor; sequence WRPYPWRRRDLNGKR.

The protein belongs to the conotoxin C superfamily. Consomatin family. Expressed by the venom duct.

Its subcellular location is the secreted. Moderately activates human somatostatin receptors (SSTR) with a preferential activation of SSTR1 and SSTR4. In vivo, does not cause behavioral changes in mice within a few minutes of intracranial injection, but causes a progressive loss of movement thereafter. Four to five hours after injection, mice recover, even with the highest dose tested. Shows antinociception and antihyperalgesia activities in two mouse models of acute pain, most probably by acting outside the central nervous system. In Conus geographus (Geography cone), this protein is Consomatin G2.